The primary structure comprises 283 residues: Phosphate import ATP-binding protein PstB (283 aa).

Polar residues predominate over residues 1-20 (MAQTLAQTKQISQSHTFDVS). Residues 1–33 (MAQTLAQTKQISQSHTFDVSQSHHKTPNDTNSH) form a disordered region. The ABC transporter domain occupies 37 to 278 (YSTQNLDLWY…PSNKKTEDYI (242 aa)). Residue 69–76 (GPSGCGKS) participates in ATP binding.

The protein belongs to the ABC transporter superfamily. Phosphate importer (TC 3.A.1.7) family. The complex is composed of two ATP-binding proteins (PstB), two transmembrane proteins (PstC and PstA) and a solute-binding protein (PstS).

Its subcellular location is the cell membrane. It catalyses the reaction phosphate(out) + ATP + H2O = ADP + 2 phosphate(in) + H(+). Its function is as follows. Part of the ABC transporter complex PstSACB involved in phosphate import. Responsible for energy coupling to the transport system. This Staphylococcus aureus (strain bovine RF122 / ET3-1) protein is Phosphate import ATP-binding protein PstB.